Here is a 311-residue protein sequence, read N- to C-terminus: S-adenosyl-L-methionine-dependent tRNA 4-demethylwyosine synthase (311 aa).

Positions 26, 39, 52, 62, 66, and 69 each coordinate [4Fe-4S] cluster. Residues Tyr-45 to Asn-283 form the Radical SAM core domain.

It belongs to the TYW1 family. Monomer. [4Fe-4S] cluster is required as a cofactor.

The protein resides in the cytoplasm. The catalysed reaction is N(1)-methylguanosine(37) in tRNA(Phe) + pyruvate + S-adenosyl-L-methionine = 4-demethylwyosine(37) in tRNA(Phe) + 5'-deoxyadenosine + L-methionine + CO2 + H2O. Its function is as follows. Component of the wyosine derivatives biosynthesis pathway that catalyzes the condensation of N-methylguanine with 2 carbon atoms from pyruvate to form the tricyclic 4-demethylwyosine (imG-14) on guanosine-37 of tRNA(Phe). The protein is S-adenosyl-L-methionine-dependent tRNA 4-demethylwyosine synthase of Methanocaldococcus jannaschii (strain ATCC 43067 / DSM 2661 / JAL-1 / JCM 10045 / NBRC 100440) (Methanococcus jannaschii).